The following is an 881-amino-acid chain: MASSTLIQNRSCGVTSSMSSFQIFRGQPLRFPGTRTPAAVQCLKKRRCLRPTESVLESSPGSGSYRIVTGPSGINPSSNGHLQEGSLTHRLPIPMEKSIDNFQSTLYVSDIWSETLQRTECLLQVTENVQMNEWIEEIRMYFRNMTLGEISMSPYDTAWVARVPALDGSHGPQFHRSLQWIIDNQLPDGDWGEPSLFLGYDRVCNTLACVIALKTWGVGAQNVERGIQFLQSNIYKMEEDDANHMPIGFEIVFPAMMEDAKALGLDLPYDATILQQISAEREKKMKKIPMAMVYKYPTTLLHSLEGLHREVDWNKLLQLQSENGSFLYSPASTACALMYTKDVKCFDYLNQLLIKFDHACPNVYPVDLFERLWMVDRLQRLGISRYFEREIRDCLQYVYRYWKDCGIGWASNSSVQDVDDTAMAFRLLRTHGFDVKEDCFRQFFKDGEFFCFAGQSSQAVTGMFNLSRASQTLFPGESLLKKARTFSRNFLRTKHENNECFDKWIITKDLAGEVEYNLTFPWYASLPRLEHRTYLDQYGIDDIWIGKSLYKMPAVTNEVFLKLAKADFNMCQALHKKELEQVIKWNASCQFRDLEFARQKSVECYFAGAATMFEPEMVQARLVWARCCVLTTVLDDYFDHGTPVEELRVFVQAVRTWNPELINGLPEQAKILFMGLYKTVNTIAEEAFMAQKRDVHHHLKHYWDKLITSALKEAEWAESGYVPTFDEYMEVAEISVALEPIVCSTLFFAGHRLDEDVLDSYDYHLVMHLVNRVGRILNDIQGMKREASQGKISSVQIYMEEHPSVPSEAMAIAHLQELVDNSMQQLTYEVLRFTAVPKSCKRIHLNMAKIMHAFYKDTDGFSSLTAMTGFVKKVLFEPVPE.

Residues 1–41 (MASSTLIQNRSCGVTSSMSSFQIFRGQPLRFPGTRTPAAVQ) constitute a chloroplast transit peptide. Mg(2+) is bound by residues aspartate 417, aspartate 419, aspartate 635, aspartate 639, asparagine 778, aspartate 779, and glutamate 786. The DXDDTA motif signature appears at 417-422 (DVDDTA). The short motif at 635-639 (DDYFD) is the DDXXD motif element.

The protein belongs to the terpene synthase family. The cofactor is Mg(2+).

It localises to the plastid. It is found in the chloroplast. The catalysed reaction is (2E,6E,10E)-geranylgeranyl diphosphate = ent-copalyl diphosphate. The enzyme catalyses ent-copalyl diphosphate = ent-kaur-16-ene + diphosphate. It catalyses the reaction ent-copalyl diphosphate = ent-beyerene + diphosphate. It carries out the reaction ent-copalyl diphosphate = ent-sandaracopimara-8(14),15-diene + diphosphate. The catalysed reaction is ent-copalyl diphosphate = ent-isokaurene + diphosphate. The enzyme catalyses ent-copalyl diphosphate + H2O = 16alpha-hydroxy-ent-kaurene + diphosphate. It functions in the pathway secondary metabolite biosynthesis; terpenoid biosynthesis. Bifunctional copalyl diphosphate/kaurene synthase involved in the biosynthesis of labdane-related diterpenoids (LRDs) natural products such as ent-beyerene, an antimicrobial compound. Supports the conversion of geranylgeranyl diphosphate (GGPP) to ent-copalyl diphosphate (ent-CDP). Also catalyzes the subsequent cyclization of ent-CDP into many diterpenes, including ent-kaur-16-ene as the major product, and ent-beyerene, ent-sandaracopimaradiene, ent-kaur-15-ene (ent-isokaurene) and 16-hydroxy-ent-kaurene (ent-16-alpha-hydroxy-kaurene) as minor products. This chain is Ent-kaurene synthase CPS/KS, chloroplastic, found in Physcomitrium patens (Spreading-leaved earth moss).